Here is a 127-residue protein sequence, read N- to C-terminus: Stationary phase protein 3 (127 aa).

2 consecutive transmembrane segments (helical) span residues 29–49 and 63–83; these read LFLFLFVFVFVFIFVYFFYVI and ANSIWYYLSIINIFFPLCFFL. N-linked (GlcNAc...) asparagine glycosylation is present at N86.

The protein resides in the membrane. Required for survival during stationary phase. The protein is Stationary phase protein 3 (SPG3) of Saccharomyces cerevisiae (strain ATCC 204508 / S288c) (Baker's yeast).